Here is a 156-residue protein sequence, read N- to C-terminus: Large ribosomal subunit protein uL15 (156 aa).

Positions 26–46 (GIGCGKGKTSGRGHKGQKARS) are disordered. Residues 34-43 (TSGRGHKGQK) show a composition bias toward basic residues.

The protein belongs to the universal ribosomal protein uL15 family. In terms of assembly, part of the 50S ribosomal subunit.

Functionally, binds to the 23S rRNA. The chain is Large ribosomal subunit protein uL15 from Ehrlichia canis (strain Jake).